Consider the following 577-residue polypeptide: Solute carrier family 22 member 16 (577 aa).

The chain crosses the membrane as a helical span at residues 23-43; that stretch reads LYFICAFQNISCGIHYLASVF. N-linked (GlcNAc...) asparagine glycosylation is found at asparagine 57, asparagine 65, asparagine 68, and asparagine 108. Helical transmembrane passes span 152 to 172, 183 to 203, 214 to 234, 244 to 264, and 268 to 288; these read WLAMLIQPLFMFGVLLGSVTF, VVLWATSSSMFLFGIAAAFAV, FLAMVASGYLVVGFVYVMEFI, VHLHSFFAVGTLLVALTGYLV, and WLYQMILSTVTVPFILCCWVL. Residues asparagine 345 and asparagine 352 are each glycosylated (N-linked (GlcNAc...) asparagine). 6 helical membrane-spanning segments follow: residues 359–379, 389–409, 416–436, 441–461, 476–496, and 501–521; these read TLTVWLIWFTGSLGFYSFSLN, LNLFLLGVVEIPAYTFVCIAM, TVLAYSLFCSALACGVVMVIP, ILGVVTAMVGKFAIGAAFGLI, LAVGSGSMVCRLASILAPFSV, and IWIFIPQLFVGTMALLSGVLT. Positions 543 to 577 are disordered; that stretch reads ESENESKSSKLLLTTNNSGLEKTEAITPRDSGLGE. N-linked (GlcNAc...) asparagine glycosylation is found at asparagine 546 and asparagine 558. A compositionally biased stretch (low complexity) spans 551 to 560; sequence SKLLLTTNNS.

This sequence belongs to the major facilitator (TC 2.A.1) superfamily. Organic cation transporter (TC 2.A.1.19) family. As to expression, expressed in testis and epididymis (at protein level). Expressed in endometrium (at protein level); highly expressed during the normal secretory phase, but expression is significantly reduced in the proliferative phase. Expressed at lower levels in adult tissues including bone marrow (at protein level). Expressed in hematopoietic cells, including CD34(+) leukocytes. Expressed in fetal liver (at protein level), brain, lung, kidney, heart, skeletal muscle, spleen and thymus. Expressed in leukemia cells. Abundantly expressed in ovarian cancer clear-cell adenocarcinoma.

Its subcellular location is the cell membrane. The enzyme catalyses (R)-carnitine(in) = (R)-carnitine(out). It catalyses the reaction spermidine(in) = spermidine(out). In terms of biological role, facilitative organic cation transporter that mediates the transport of carnitine as well as the polyamine spermidine. Mediates the partially Na(+)-dependent bidirectional transport of carnitine. May mediate L-carnitine secretion from testis epididymal epithelium into the lumen which is involved in the maturation of spermatozoa. This chain is Solute carrier family 22 member 16, found in Homo sapiens (Human).